A 485-amino-acid chain; its full sequence is MSLEEVLDEIRREVTPDPEERELVEGFARRILSEVRDRLKERDPDAEVELIGSVARDTWLPGASDVDVFCVFPKDRDLDEIVEVTLEVGREAIEALGGEAREEYAHHPYIGGEVEHRGRTFEVDVVPCYDTEPGEVITPVDRTPHHNRYVEEHLEDTVEARLLKAFVKAIDAYGAEVRVKGFSGYLCELLAIHYGSFEEVLREAVRTWRPGFVIDLEGFVGEVYEDYDEVRETFEDQDPALIVLDPVDPERNVAAALSRRQLTRFILAARAFLGDPSPEFFRGRKPEPVSGEKVRDWFERNPTHVVAIEVRLPDEVEDIYWPQLEKTARSLSRVLENEGFEVRRWHVMRDSEEEHGYVLLEFEHGKLPELEWRVGPSGWVREDRVRGFVRAHGRFWVEEDGKLATRAERKFVRPEDLLGRLEGADRQTLLSHGFGKDLARSSEGEVRLLSAEELAELADRDPELGKALAEFMRGDPLSELVRDRL.

Ser-53 and Arg-56 together coordinate ATP. CTP contacts are provided by Ser-53 and Arg-56. The Mg(2+) site is built by Asp-65, Asp-67, and Asp-124. The ATP site is built by His-146, Lys-164, and Tyr-173. Positions 146, 164, and 173 each coordinate CTP.

It belongs to the tRNA nucleotidyltransferase/poly(A) polymerase family. Archaeal CCA-adding enzyme subfamily. In terms of assembly, homodimer. Mg(2+) is required as a cofactor.

The enzyme catalyses a tRNA precursor + 2 CTP + ATP = a tRNA with a 3' CCA end + 3 diphosphate. It catalyses the reaction a tRNA with a 3' CCA end + 2 CTP + ATP = a tRNA with a 3' CCACCA end + 3 diphosphate. Functionally, catalyzes the addition and repair of the essential 3'-terminal CCA sequence in tRNAs without using a nucleic acid template. Adds these three nucleotides in the order of C, C, and A to the tRNA nucleotide-73, using CTP and ATP as substrates and producing inorganic pyrophosphate. tRNA 3'-terminal CCA addition is required both for tRNA processing and repair. Also involved in tRNA surveillance by mediating tandem CCA addition to generate a CCACCA at the 3' terminus of unstable tRNAs. While stable tRNAs receive only 3'-terminal CCA, unstable tRNAs are marked with CCACCA and rapidly degraded. The chain is CCA-adding enzyme from Methanopyrus kandleri (strain AV19 / DSM 6324 / JCM 9639 / NBRC 100938).